A 163-amino-acid chain; its full sequence is MDYTLTREESKLLMELLGLPMEQYGNFPLMRKAFLQKCKIMHPDKGGDEQTAKMLISLYKKLESEVKSLNTDDGFSTEEVCKISKLTYIKDWLTCSFGSFSCKCLFCLLLKSHKQELTKKPKVWGDCLCFKCYTLWFGLQYTVDIYQSWQALIGVTLFKNLNI.

Met1 is modified (N-acetylmethionine; by host). A J domain is found at 12–76 (LLMELLGLPM…KSLNTDDGFS (65 aa)). The C4-type; atypical zinc finger occupies 95-107 (CSFGSFSCKCLFC). The H1C3-type; atypical zinc finger occupies 113–132 (HKQELTKKPKVWGDCLCFKC).

In terms of assembly, interacts with host PPP2R1A; the interaction inhibits PP2A activity.

It localises to the host cytoplasm. The protein localises to the host nucleus. Promotes efficient viral genome replication by accelerating both G1 and S phase progression of the cell cycle. Inhibits host PP2A by binding to the A subunit, thereby displacing lower affinity regulatory B subunit. Inactivation of PP2A in turn results in the transactivation of cyclin A and cyclin D1 promoters. Late during the infection cycle, ST may induce dephosphorylation of host MTOR, leading to the inhibition of cap-dependent translation. May establish and maintain high levels of viral genomes during persistent infection in cell culture. In Saimiri boliviensis boliviensis (Bolivian squirrel monkey), this protein is Small t antigen.